Here is a 500-residue protein sequence, read N- to C-terminus: Serine carboxypeptidase 3 (500 aa).

An N-terminal signal peptide occupies residues 1–21 (MATARVSLILLVVVLAASACA). The propeptide occupies 22–73 (EGLRLPRDAKFPAAQAERLIRSLNLLPKEAGPTGAGDVPSVAPGELLERRVT). Disulfide bonds link Cys-126-Cys-366, Cys-294-Cys-309, and Cys-332-Cys-337. Residue Asn-144 is glycosylated (N-linked (GlcNAc...) asparagine). Ser-216 is an active-site residue. The active site involves Asp-404. Residue Cys-407 coordinates substrate. The active site involves His-461. A propeptide spanning residues 485 to 500 (EEWLAELPEQPMYAAM) is cleaved from the precursor.

The protein belongs to the peptidase S10 family. As to quaternary structure, monomer.

The catalysed reaction is Release of a C-terminal amino acid with broad specificity.. This is Serine carboxypeptidase 3 (CBP3) from Oryza sativa subsp. japonica (Rice).